Consider the following 382-residue polypeptide: Layilin (382 aa).

A signal peptide spans 1-21; the sequence is MRPGTALQAVLLAVLLVGLRA. The Extracellular segment spans residues 22–235; that stretch reads ATGRLLSASD…SREAALNLAY (214 aa). Residues 45–185 enclose the C-type lectin domain; the sequence is TQRPCYKVIY…CNMKNNFICK (141 aa). Cystine bridges form between cysteine 71-cysteine 184 and cysteine 150-cysteine 176. An N-linked (GlcNAc...) asparagine glycan is attached at asparagine 117. The chain crosses the membrane as a helical span at residues 236–256; it reads ILIPSIPLLLLLVVTTVVCWV. Residues 257–382 are Cytoplasmic-facing; sequence WICRKRKREQ…GWVENEIYGY (126 aa). The interval 266–285 is disordered; it reads QPDPSTKKQHTIWPSPHQGN. 2 positions are modified to phosphoserine: serine 286 and serine 299. The interval 330 to 374 is interaction with NF2; it reads DYDNMAVNPSESGFVTLVSVESGFVTNDIYEFSPDQMGRSKESGW. Residues 337–382 are interaction with TLN1; sequence NPSESGFVTLVSVESGFVTNDIYEFSPDQMGRSKESGWVENEIYGY. A run of 5 repeats spans residues 340–344, 350–354, 356–359, 371–375, and 377–380. The segment at 340–375 is 3 X 5 AA repeats of E-S-G-X-V; sequence ESGFVTLVSVESGFVTNDIYEFSPDQMGRSKESGWV. Residues 356-380 are 2 X 4 AA repeats of N-X-I-Y; sequence NDIYEFSPDQMGRSKESGWVENEIY.

Interacts with NF2, RDX and TLN1.

The protein resides in the membrane. Its function is as follows. Receptor for hyaluronate. The polypeptide is Layilin (LAYN) (Homo sapiens (Human)).